The primary structure comprises 562 residues: NAD-dependent malic enzyme (562 aa).

Tyr101 functions as the Proton donor in the catalytic mechanism. Arg154 is a binding site for NAD(+). The active-site Proton acceptor is Lys172. Residues Glu243, Asp244, and Asp267 each coordinate a divalent metal cation. NAD(+) is bound by residues Asp267 and Asn415.

The protein belongs to the malic enzymes family. In terms of assembly, homotetramer. Mg(2+) is required as a cofactor. Mn(2+) serves as cofactor.

The catalysed reaction is (S)-malate + NAD(+) = pyruvate + CO2 + NADH. It catalyses the reaction oxaloacetate + H(+) = pyruvate + CO2. This chain is NAD-dependent malic enzyme, found in Vibrio campbellii (strain ATCC BAA-1116).